Here is a 365-residue protein sequence, read N- to C-terminus: Alanine racemase (365 aa).

Lysine 35 (proton acceptor; specific for D-alanine) is an active-site residue. Lysine 35 bears the N6-(pyridoxal phosphate)lysine mark. Residue arginine 130 coordinates substrate. Tyrosine 256 acts as the Proton acceptor; specific for L-alanine in catalysis. Methionine 304 contributes to the substrate binding site.

It belongs to the alanine racemase family. The cofactor is pyridoxal 5'-phosphate.

It carries out the reaction L-alanine = D-alanine. It functions in the pathway amino-acid biosynthesis; D-alanine biosynthesis; D-alanine from L-alanine: step 1/1. Functionally, catalyzes the interconversion of L-alanine and D-alanine. May also act on other amino acids. The protein is Alanine racemase (alr) of Acidovorax sp. (strain JS42).